A 720-amino-acid polypeptide reads, in one-letter code: GTPase-activating protein gyp2 (720 aa).

The 66-residue stretch at 20–85 folds into the GRAM domain; that stretch reads LDPASFFRIN…AAVRKLEREN (66 aa). In terms of domain architecture, Rab-GAP TBC spans 216 to 404; the sequence is GIPNNLRADI…RILDCLFVNG (189 aa).

It localises to the cytoplasm. It is found in the nucleus. In terms of biological role, stimulates specifically the GTPase activity of ypt2 and ryh1. Inactivates ryh1 during recycling between the endosome and the Golgi compartments. This chain is GTPase-activating protein gyp2, found in Schizosaccharomyces pombe (strain 972 / ATCC 24843) (Fission yeast).